The following is a 663-amino-acid chain: Glucans biosynthesis glucosyltransferase H (663 aa).

The next 6 membrane-spanning stretches (helical) occupy residues 64-86, 101-123, 413-435, 470-492, 558-580, and 584-606; these read WMLGLMTIAMGVAGWKASFDTIA, LAPLFLALSLWFCTALIGFVVLM, LVIGVLSYALSPLWFFCLSAGLI, AWAMIITFVLLFGPKILGAILVL, EAWAAMGWISLSGLILAASFWFT, and LTATAPILAGLVLAVPLTMLGAH.

This sequence belongs to the glycosyltransferase 2 family. OpgH subfamily.

It localises to the cell inner membrane. It participates in glycan metabolism; osmoregulated periplasmic glucan (OPG) biosynthesis. Functionally, involved in the biosynthesis of osmoregulated periplasmic glucans (OPGs). The chain is Glucans biosynthesis glucosyltransferase H from Caulobacter vibrioides (strain ATCC 19089 / CIP 103742 / CB 15) (Caulobacter crescentus).